Here is a 589-residue protein sequence, read N- to C-terminus: Ufm1-specific protease (589 aa).

Residues 1–22 (MTNSQTVSLIGPTQMAPQSTPP) form a disordered region. Active-site residues include C421, D545, and H547.

Belongs to the peptidase C78 family. Interacts with odr-4. In terms of tissue distribution, expressed in head and tail neurons. Expressed in the amphid head neurons ADL, ASI, ASH, ASJ, ASG, ADF, ASK, AWA, AWB, AWC, and in two tail neurons, the phasmid tail neurons PHA and PHB.

Its subcellular location is the endoplasmic reticulum membrane. The protein resides in the cytoplasm. The protein localises to the perinuclear region. Its function is as follows. Thiol protease which recognizes and hydrolyzes the peptide bond at the C-terminal Gly of ufm-1, a ubiquitin-like modifier protein bound to a number of target proteins. Required, with oct-4, for the localization of a subset of 7 transmembrane domain odorant receptors, including odr-10, to the cilia of olfactory neurons AWA and AWC. Operates in aggregation behavior, and responses to oxygen levels. In Caenorhabditis elegans, this protein is Ufm1-specific protease.